The primary structure comprises 986 residues: Ankyrin repeat, PH and SEC7 domain containing protein secG (986 aa).

Low complexity predominate over residues 1-28 (MGSTSNSTKNTGSTTTTTTTAAPATTAK). Residues 1–43 (MGSTSNSTKNTGSTTTTTTTAAPATTAKHSNSAPTRPSVHYYS) form a disordered region. Residues 29–43 (HSNSAPTRPSVHYYS) show a composition bias toward polar residues. 15 ANK repeats span residues 34–63 (PTRP…TSPD), 68–97 (EKRT…NANI), 101–131 (AGNT…DVNT), 135–164 (KNGT…DPRA), 168–197 (NGET…KVNA), 201–230 (DCIT…KVDP), 234–263 (HGIS…NINC), 267–296 (EGVT…KINM), 300–329 (MGET…TMID), 334–363 (RQST…QINI), 367–396 (EGAT…PICI), 400–429 (QGAT…ELEV), 433–462 (QGGT…NVNA), 466–495 (HSST…RIDA), and 499–528 (AGKT…DLDQ). The SEC7 domain occupies 580 to 770 (QLAAEKQKLL…ENLYDKIVTN (191 aa)). The PH domain maps to 784-895 (HVEKKGWLTK…WVQSIKSNIH (112 aa)). Residues 911–986 (IRGRGKVSTK…PVQQQTSALS (76 aa)) form a disordered region. The segment covering 920–929 (KPIQNRKQTI) has biased composition (polar residues). 2 stretches are compositionally biased toward low complexity: residues 936–953 (TTTT…SVGS) and 963–986 (SSGS…SALS).

The protein is Ankyrin repeat, PH and SEC7 domain containing protein secG (secG) of Dictyostelium discoideum (Social amoeba).